Here is a 616-residue protein sequence, read N- to C-terminus: Formin-binding protein 1 (616 aa).

The tract at residues 1–79 (MSWGTELWDQ…CKAFLSTLNE (79 aa)) is required for self-association and induction of membrane tubulation. One can recognise an F-BAR domain in the interval 1-264 (MSWGTELWDQ…AAESIDQKND (264 aa)). Residues 1–334 (MSWGTELWDQ…KKNKLMSLLT (334 aa)) are interaction with microtubules. Residues Lys-66 and Lys-110 each carry the N6-acetyllysine modification. Positions 67–259 (YTACKAFLST…DGIVKAAESI (193 aa)) form a coiled coil. The required for self-association and induction of membrane tubulation stretch occupies residues 251–616 (GIVKAAESID…VYLDKNAKGS (366 aa)). 2 disordered regions span residues 280-314 (GDIE…RFGG) and 332-366 (LLTS…KEPL). Phosphoserine occurs at positions 296 and 299. Pro residues predominate over residues 337–346 (HQPPPPPPAS). Residues Ser-348 and Ser-358 each carry the phosphoserine modification. A coiled-coil region spans residues 398–490 (PEDFSNFPPE…VEGRLPARSE (93 aa)). Residues 399 to 551 (EDFSNFPPEQ…FDDEEPLPAI (153 aa)) are interaction with RND2. An REM-1 domain is found at 403–480 (NFPPEQRRKK…AQKFEAWLAE (78 aa)). Residues 487–531 (ARSEQARRQSGLYDGQTHQTVTNCAQDRESPDGSYTEEQSQESEH) form a disordered region. Positions 494 to 616 (RQSGLYDGQT…VYLDKNAKGS (123 aa)) are interaction with PDE6G. Ser-496 is modified (phosphoserine). Tyr-499 is subject to Phosphotyrosine. Over residues 502–511 (QTHQTVTNCA) the composition is skewed to polar residues. Residues 513–616 (DRESPDGSYT…VYLDKNAKGS (104 aa)) form a required for interaction with TNKS region. Position 520 is a phosphoserine (Ser-520). The tract at residues 534–616 (LAPDFDDEFD…VYLDKNAKGS (83 aa)) is interaction with DNM1 and DNM3. The 62-residue stretch at 549–610 (PAIGTCKALY…PTSYVEVYLD (62 aa)) folds into the SH3 domain. Residues 549-616 (PAIGTCKALY…VYLDKNAKGS (68 aa)) form an interaction with ARHGAP17, DAAM1, DIAPH1 and DIAPH2 region. The interaction with DNM2 and WASL stretch occupies residues 552–608 (GTCKALYTFEGQNEGTISVVEGETLSVIEEDKGDGWTRIRRNEDEEGYVPTSYVEVY). The segment at 552 to 609 (GTCKALYTFEGQNEGTISVVEGETLSVIEEDKGDGWTRIRRNEDEEGYVPTSYVEVYL) is interaction with FASLG.

It belongs to the FNBP1 family. In terms of assembly, homodimerizes, the dimers can polymerize end-to-end to form filamentous structures. Interacts specifically with GTP-bound RND2 and CDC42. Interacts with AKAP9, ARHGAP17, DAAM1, DIAPH1, DIAPH2, DNM1, DNM2, DNM3, FASLG/FASL, microtubules, PDE6G, SNX2 and WASL/N-WASP. May interact with TNKS. In terms of tissue distribution, expressed in brain and testis.

The protein resides in the cytoplasm. It is found in the cytoskeleton. The protein localises to the cell cortex. It localises to the lysosome. Its subcellular location is the cytoplasmic vesicle. The protein resides in the cell membrane. It is found in the membrane. The protein localises to the clathrin-coated pit. Its function is as follows. Required to coordinate membrane tubulation with reorganization of the actin cytoskeleton during the late stage of clathrin-mediated endocytosis. Binds to lipids such as phosphatidylinositol 4,5-bisphosphate and phosphatidylserine and promotes membrane invagination and the formation of tubules. Also enhances actin polymerization via the recruitment of WASL/N-WASP, which in turn activates the Arp2/3 complex. Actin polymerization may promote the fission of membrane tubules to form endocytic vesicles. May act as a link between RND2 signaling and regulation of the actin cytoskeleton. May be required for the lysosomal retention of FASLG/FASL. This Mus musculus (Mouse) protein is Formin-binding protein 1 (Fnbp1).